We begin with the raw amino-acid sequence, 291 residues long: Formamidopyrimidine-DNA glycosylase (291 aa).

The active-site Schiff-base intermediate with DNA is Pro2. The active-site Proton donor is Glu3. Catalysis depends on Lys58, which acts as the Proton donor; for beta-elimination activity. DNA-binding residues include His100, Arg123, and Lys166. The FPG-type zinc finger occupies 257 to 291; it reads SVYGREGKECSRCGMHIVRIVQSGRSSFYCPQCQK. Arg281 (proton donor; for delta-elimination activity) is an active-site residue.

Belongs to the FPG family. Monomer. It depends on Zn(2+) as a cofactor.

The catalysed reaction is Hydrolysis of DNA containing ring-opened 7-methylguanine residues, releasing 2,6-diamino-4-hydroxy-5-(N-methyl)formamidopyrimidine.. The enzyme catalyses 2'-deoxyribonucleotide-(2'-deoxyribose 5'-phosphate)-2'-deoxyribonucleotide-DNA = a 3'-end 2'-deoxyribonucleotide-(2,3-dehydro-2,3-deoxyribose 5'-phosphate)-DNA + a 5'-end 5'-phospho-2'-deoxyribonucleoside-DNA + H(+). Involved in base excision repair of DNA damaged by oxidation or by mutagenic agents. Acts as a DNA glycosylase that recognizes and removes damaged bases. Has a preference for oxidized purines, such as 7,8-dihydro-8-oxoguanine (8-oxoG). Has AP (apurinic/apyrimidinic) lyase activity and introduces nicks in the DNA strand. Cleaves the DNA backbone by beta-delta elimination to generate a single-strand break at the site of the removed base with both 3'- and 5'-phosphates. This Bartonella bacilliformis (strain ATCC 35685 / KC583 / Herrer 020/F12,63) protein is Formamidopyrimidine-DNA glycosylase.